Consider the following 252-residue polypeptide: Type II secretion system protein N (252 aa).

Residues 1 to 4 (MKRA) lie on the Cytoplasmic side of the membrane. Residues 5–25 (VGYGLLFSTVLMTSVVVHLPA) traverse the membrane as a helical segment. Over 26-252 (QVALSPLPLP…RYPFNQQGQL (227 aa)) the chain is Periplasmic.

This sequence belongs to the GSP N family.

The protein localises to the cell inner membrane. Its function is as follows. Involved in a type II secretion system (T2SS, formerly general secretion pathway, GSP) for the export of proteins. Required for secretion of cholera toxin through the outer membrane. This is Type II secretion system protein N (epsN) from Vibrio cholerae serotype O1 (strain ATCC 39315 / El Tor Inaba N16961).